Consider the following 757-residue polypeptide: Endoribonuclease ysh1 (757 aa).

6 residues coordinate Zn(2+): H78, H80, D82, H83, H165, and D186. H403 serves as the catalytic Proton donor. H425 is a binding site for Zn(2+). The segment at 698 to 757 is disordered; that stretch reads SQNDVSEDDFENEESDDDKIFEQQTKIEDDVKNENKTEPVEEQKSEEKNEQPNLKKEELS. A compositionally biased stretch (acidic residues) spans 702–714; sequence VSEDDFENEESDD. Over residues 715–757 the composition is skewed to basic and acidic residues; the sequence is DKIFEQQTKIEDDVKNENKTEPVEEQKSEEKNEQPNLKKEELS.

It belongs to the metallo-beta-lactamase superfamily. RNA-metabolizing metallo-beta-lactamase-like family. CPSF2/YSH1 subfamily.

Its subcellular location is the cytoplasm. The protein resides in the nucleus. In terms of biological role, component of the cleavage factor I (CF I) involved in pre-mRNA 3'-end processing. The chain is Endoribonuclease ysh1 (ysh1) from Schizosaccharomyces pombe (strain 972 / ATCC 24843) (Fission yeast).